A 192-amino-acid polypeptide reads, in one-letter code: MPTLLQKHEGYLTGHCLVAMPGMGDPRFEGTVIYLCAHTAEGAMGIVINRELEEISFPDIVGQLGIQPTPFCDDVRVQFGGPVETGRGFVLHTSDYQNEGTLSVDDSMALTATLDVLRAIASGDGPMRVIMALGYAGWGAGQLDGELKGNVWLTVPADRQLVFETAVKDKYTTAMGRLGIDPRLLSENAGHA.

It belongs to the UPF0301 (AlgH) family.

The sequence is that of UPF0301 protein Rru_A3059 from Rhodospirillum rubrum (strain ATCC 11170 / ATH 1.1.1 / DSM 467 / LMG 4362 / NCIMB 8255 / S1).